Reading from the N-terminus, the 780-residue chain is Mediator of RNA polymerase II transcription subunit 15 (780 aa).

The interval 1–124 (MSEEDWPSPK…PQPTSAQARN (124 aa)) is interaction with nhr-49. Residues 2-96 (SEEDWPSPKF…SPPCTTAALL (95 aa)) are interaction with sbp-1. Disordered stretches follow at residues 91-152 (TTAA…APSA), 166-363 (PSPD…QGMM), and 564-597 (GPGPIGRDRNSMSGSSMSGPSSGAPSMNPMGTPN). Residues 125-139 (PPVTVATTQASTTPS) show a composition bias toward low complexity. The segment covering 225-245 (PPNGYGGYGMMNGPPGSGAPM) has biased composition (gly residues). The segment covering 296 to 316 (QGATPTGPSSVLESLINQPQQ) has biased composition (polar residues). Composition is skewed to low complexity over residues 333-353 (AAQRAAAQQQQQQQQQQQQQR) and 574-594 (SMSGSSMSGPSSGAPSMNPMG).

This sequence belongs to the Mediator complex subunit 15 family. In terms of assembly, component of the Mediator complex. Interacts with nhr-49, nhr-64 and sbp-1. In terms of tissue distribution, expressed in the intestine and head neurons.

It localises to the nucleus. Its function is as follows. Component of the Mediator complex, a coactivator involved in regulated gene transcription of nearly all RNA polymerase II-dependent genes. Mediator functions as a bridge to convey information from gene-specific regulatory proteins to the basal RNA polymerase II transcription machinery. Mediator is recruited to promoters by direct interactions with regulatory proteins and serves as a scaffold for the assembly of a functional preinitiation complex with RNA polymerase II and the general transcription factors. Required for regulated expression of genes controlling fatty acid desaturation by transcription factors including sbp-1 and nhr-49. Involved in the response to simulated microgravity, in concert with sbp-1, probably acting in the intestine. In Caenorhabditis elegans, this protein is Mediator of RNA polymerase II transcription subunit 15 (mdt-15).